A 346-amino-acid polypeptide reads, in one-letter code: Trans-enoyl reductase FFUJ_12240 (346 aa).

40–43 (HDAK) serves as a coordination point for NADP(+). Substrate is bound at residue 124–131 (LAIATAGL). Residues 157–160 (ATAT), 180–183 (SPSN), Tyr-198, and 245–246 (LE) contribute to the NADP(+) site. 266–270 (APSIL) is a binding site for substrate. 335–336 (VH) provides a ligand contact to NADP(+).

Belongs to the zinc-containing alcohol dehydrogenase family.

Functionally, trans-enoyl reductase; part of the gene cluster that mediates the biosynthesis of fujikurins A-D, secondary metabolites playing a role during rice infection. The polyketide synthase PKS19 acts with the trans-enoyl reductase FFUJ_12240 and the polyketide transferase FFUJ_12241 to produce fujikurins, however, the biosynthesis pathway has not been identified yet. This is Trans-enoyl reductase FFUJ_12240 from Gibberella fujikuroi (strain CBS 195.34 / IMI 58289 / NRRL A-6831) (Bakanae and foot rot disease fungus).